The chain runs to 428 residues: Enolase (428 aa).

Q163 contributes to the (2R)-2-phosphoglycerate binding site. E205 serves as the catalytic Proton donor. D242, E285, and D312 together coordinate Mg(2+). The (2R)-2-phosphoglycerate site is built by K337, R366, S367, and K388. Catalysis depends on K337, which acts as the Proton acceptor.

The protein belongs to the enolase family. Mg(2+) is required as a cofactor.

The protein resides in the cytoplasm. Its subcellular location is the secreted. It localises to the cell surface. It catalyses the reaction (2R)-2-phosphoglycerate = phosphoenolpyruvate + H2O. It functions in the pathway carbohydrate degradation; glycolysis; pyruvate from D-glyceraldehyde 3-phosphate: step 4/5. Its function is as follows. Catalyzes the reversible conversion of 2-phosphoglycerate (2-PG) into phosphoenolpyruvate (PEP). It is essential for the degradation of carbohydrates via glycolysis. The protein is Enolase of Moorella thermoacetica (strain ATCC 39073 / JCM 9320).